Reading from the N-terminus, the 528-residue chain is Importin subunit alpha-2 (528 aa).

Low complexity predominate over residues 1–15 (MADDSASPSPSSASP). Residues 1 to 36 (MADDSASPSPSSASPLQHHREALKSSVRNTAASRRR) form a disordered region. ARM repeat units follow at residues 125-165 (VPLV…NIAA), 167-206 (EPEETKSLLPALPLLIAHLGEKSSTLVAEQCAWAIGNVAG), 209-248 (AELRSTLLAQGALRPLTRLMFSSKGSTARTAAWAMSNLIK), 253-292 (KAANELITIDGVLNAIIASLEKEDEELATEVAWVVVYLSA), 294-335 (SDRG…NLIA), 338-383 (DYMV…NIAA), 386-425 (FEHKKLIFASEATPVLIRLVTSMQFDIRREAAYTLGNLCV), and 438-477 (VEHLVAIVDGGALPGFIHLVRSADVDTAGLGLQFLELVMR).

This sequence belongs to the importin alpha family. Forms a complex with importin subunit beta-1. The whole complex, most stable and composed of importin alpha, importin beta and NLS substrate, is referred to as PTAC or pore targeting complex. As to expression, expressed in root, callus, and etiolated leaf. Low expression in green leaf.

The protein resides in the cytoplasm. It is found in the perinuclear region. Its function is as follows. Binds specifically and directly to substrates containing either a simple or bipartite NLS motif. Promotes docking of import substrates to the nuclear envelope. This chain is Importin subunit alpha-2, found in Oryza sativa subsp. japonica (Rice).